Here is a 228-residue protein sequence, read N- to C-terminus: Rab-like protein 2A (228 aa).

GTP-binding positions include 28–35 (GDSAVGKS), 76–80 (DTAGQ), and 133–136 (NKID). The interval 200-228 (LEQEEEDVPDQEQSSSIETPSEEVASPHS) is disordered.

Belongs to the small GTPase superfamily. Rab family. As to quaternary structure, interacts with IFT27, IFT81, IFT172, ATP6V1E1, HK1, LDHC, MAPRE1 and HSPA2. In terms of tissue distribution, expressed in the testis.

Functionally, plays an essential role in male fertility, sperm intra-flagellar transport, and tail assembly. Binds, in a GTP-regulated manner, to a specific set of effector proteins including key proteins involved in cilia development and function and delivers them into the growing sperm tail. The polypeptide is Rab-like protein 2A (RABL2A) (Homo sapiens (Human)).